A 102-amino-acid chain; its full sequence is Small ribosomal subunit protein uS10 (102 aa).

The protein belongs to the universal ribosomal protein uS10 family. As to quaternary structure, part of the 30S ribosomal subunit.

In terms of biological role, involved in the binding of tRNA to the ribosomes. In Kosmotoga olearia (strain ATCC BAA-1733 / DSM 21960 / TBF 19.5.1), this protein is Small ribosomal subunit protein uS10.